The sequence spans 988 residues: Transposase for transposon Tn1546 (988 aa).

It belongs to the transposase 7 family.

Functionally, required for transposition of transposon Tn1546. The sequence is that of Transposase for transposon Tn1546 from Enterococcus faecium (Streptococcus faecium).